Reading from the N-terminus, the 1513-residue chain is Protein tincar (1513 aa).

The Cytoplasmic segment spans residues M1–S77. A helical membrane pass occupies residues L78 to G98. Over A99–L120 the chain is Extracellular. Residues Q121–F141 traverse the membrane as a helical segment. Residues K142–A181 are Cytoplasmic-facing. The chain crosses the membrane as a helical span at residues L182–L202. Over L203 to A668 the chain is Extracellular. 3 disordered regions span residues T247–G266, E354–V373, and M383–R532. The segment covering A427–T466 has biased composition (low complexity). The segment covering S478–V507 has biased composition (basic residues). Basic and acidic residues predominate over residues T523 to R532. The helical transmembrane segment at E669–W689 threads the bilayer. Residues N690–A696 lie on the Cytoplasmic side of the membrane. A helical membrane pass occupies residues C697 to I717. Over S718–G736 the chain is Extracellular. A helical transmembrane segment spans residues L737 to A757. Residues S758–T787 are Cytoplasmic-facing. Residues W788–A808 form a helical membrane-spanning segment. The Extracellular segment spans residues P809–T826. The helical transmembrane segment at F827–L847 threads the bilayer. The Cytoplasmic portion of the chain corresponds to T848–H1513. Composition is skewed to low complexity over residues S879 to G903 and Q1060 to Q1071. Disordered regions lie at residues S879–A913, E1045–G1090, A1115–G1155, E1173–H1214, and A1231–A1335. The span at P1122 to V1149 shows a compositional bias: pro residues. 2 stretches are compositionally biased toward low complexity: residues L1179–Q1208 and T1255–H1285. Basic and acidic residues predominate over residues S1286 to I1296. Pro residues predominate over residues K1303–Q1314. A compositionally biased stretch (polar residues) spans M1324–A1335.

Expression varies in tissues throughout development. At stage 5, expressed in the embryo dorsal region followed by expression in a striped pattern at stage 6. During gastrulation, expressed in ventral region and ventral nerve cord. Also detected in many neurons in the externa sensilla and chordotonal organ. At stage 16, expressed on the surface of the midgut. Additionally, expressed in a subset of cardioblasts (Tin+ subpopulation) during dorsal vessel formation. In third-instar larval tissues, expressed in the eye and antennal disks. In the antennal disks, expressed in the second antennal segments. In the eye disks, strongest expression found in the ocelli, and in the differentiating ommatidial cells. Also expressed in all cells within and in the vicinity of the morphogenetic furrow.

It is found in the membrane. Involved in eye morphogenesis. May be essential for the normal differentiation of ommatidial cells. The polypeptide is Protein tincar (tinc) (Drosophila melanogaster (Fruit fly)).